The primary structure comprises 174 residues: uncharacterized protein (174 aa).

Positions 1–55 (MGCVVSKSDDIKNENESRQRNQASSSQQPSSSQTPSKQIGIAAKDSEEQPQEVSY) are disordered. A lipid anchor (N-myristoyl glycine) is attached at Gly-2. Basic and acidic residues predominate over residues 7–19 (KSDDIKNENESRQ). The segment covering 20-38 (RNQASSSQQPSSSQTPSKQ) has biased composition (low complexity).

This is an uncharacterized protein from Dictyostelium discoideum (Social amoeba).